Consider the following 331-residue polypeptide: Bifunctional nuclease 1 (331 aa).

The region spanning C126–V261 is the BFN domain. A UVR domain is found at E291–K326.

The protein belongs to the bifunctional nuclease family.

Its subcellular location is the nucleus. In terms of biological role, bifunctional nuclease with both RNase and DNase activities. Involved in basal defense response. Participates in abscisic acid-derived callose deposition following infection by a necrotrophic pathogen. This Oryza sativa subsp. japonica (Rice) protein is Bifunctional nuclease 1 (BBD1).